Here is a 398-residue protein sequence, read N- to C-terminus: tRNA-specific 2-thiouridylase MnmA (398 aa).

ATP-binding positions include 18-25 (AMSGGVDS) and leucine 44. Catalysis depends on cysteine 112, which acts as the Nucleophile. A disulfide bridge connects residues cysteine 112 and cysteine 213. Glycine 136 contributes to the ATP binding site. The interval 163-165 (RDQ) is interaction with tRNA. Cysteine 213 (cysteine persulfide intermediate) is an active-site residue.

This sequence belongs to the MnmA/TRMU family.

The protein resides in the cytoplasm. The catalysed reaction is S-sulfanyl-L-cysteinyl-[protein] + uridine(34) in tRNA + AH2 + ATP = 2-thiouridine(34) in tRNA + L-cysteinyl-[protein] + A + AMP + diphosphate + H(+). In terms of biological role, catalyzes the 2-thiolation of uridine at the wobble position (U34) of tRNA, leading to the formation of s(2)U34. In Sinorhizobium fredii (strain NBRC 101917 / NGR234), this protein is tRNA-specific 2-thiouridylase MnmA.